The sequence spans 164 residues: V-type proton ATPase subunit c' (164 aa).

Residues 1-14 are Vacuolar-facing; it reads MSTQLASNIYAPLY. A helical membrane pass occupies residues 15 to 37; it reads APFFGFAGCAAAMVLSCLGAAIG. The Cytoplasmic portion of the chain corresponds to 38-59; that stretch reads TAKSGIGIAGIGTFKPELIMKS. The helical transmembrane segment at 60–80 threads the bilayer; it reads LIPVVMSGILAIYGLVVAVLI. At 81–98 the chain is on the vacuolar side; that stretch reads AGNLSPTEDYTLFNGFMH. Residues 99-120 form a helical membrane-spanning segment; sequence LSCGLCVGFACLSSGYAIGMVG. Residues 121 to 132 lie on the Cytoplasmic side of the membrane; that stretch reads DVGVRKYMHQPR. Residues 133 to 158 form a helical membrane-spanning segment; the sequence is LFVGIVLILIFSEVLGLYGMIVALIL. The Vacuolar portion of the chain corresponds to 159-164; that stretch reads NTRGSE.

Belongs to the V-ATPase proteolipid subunit family. V-ATPase is a heteromultimeric enzyme composed of a peripheral catalytic V1 complex (components A to H) attached to an integral membrane V0 proton pore complex (components: a, c, c', c'', d, e, f and VOA1). The decameric c-ring forms the proton-conducting pore, and is composed of eight proteolipid subunits c, one subunit c' and one subunit c''.

Its subcellular location is the vacuole membrane. Its function is as follows. Proton-conducting pore forming subunit of the V0 complex of vacuolar(H+)-ATPase (V-ATPase), a multisubunit enzyme composed of a peripheral complex (V1) that hydrolyzes ATP and a membrane integral complex (V0) that translocates protons. V-ATPase is responsible for acidifying and maintaining the pH of intracellular compartments. The protein is V-type proton ATPase subunit c' (VMA11) of Saccharomyces cerevisiae (strain ATCC 204508 / S288c) (Baker's yeast).